Consider the following 158-residue polypeptide: Transcription elongation factor GreA (158 aa).

Positions 47 to 73 (AEYHAAREKQSFIEGRIQELQAKLARA) form a coiled coil.

It belongs to the GreA/GreB family.

Necessary for efficient RNA polymerase transcription elongation past template-encoded arresting sites. The arresting sites in DNA have the property of trapping a certain fraction of elongating RNA polymerases that pass through, resulting in locked ternary complexes. Cleavage of the nascent transcript by cleavage factors such as GreA or GreB allows the resumption of elongation from the new 3'terminus. GreA releases sequences of 2 to 3 nucleotides. This is Transcription elongation factor GreA from Thermodesulfovibrio yellowstonii (strain ATCC 51303 / DSM 11347 / YP87).